Consider the following 72-residue polypeptide: MAKEDNIEMQGTILETLPNTMFRVELENGHVVTAHISGKMRKNYIRILTGDKVTVQLTPYDLSKGRIVFRSR.

The region spanning 1-72 (MAKEDNIEMQ…SKGRIVFRSR (72 aa)) is the S1-like domain.

It belongs to the IF-1 family. In terms of assembly, component of the 30S ribosomal translation pre-initiation complex which assembles on the 30S ribosome in the order IF-2 and IF-3, IF-1 and N-formylmethionyl-tRNA(fMet); mRNA recruitment can occur at any time during PIC assembly.

The protein localises to the cytoplasm. Functionally, one of the essential components for the initiation of protein synthesis. Stabilizes the binding of IF-2 and IF-3 on the 30S subunit to which N-formylmethionyl-tRNA(fMet) subsequently binds. Helps modulate mRNA selection, yielding the 30S pre-initiation complex (PIC). Upon addition of the 50S ribosomal subunit IF-1, IF-2 and IF-3 are released leaving the mature 70S translation initiation complex. This Shewanella pealeana (strain ATCC 700345 / ANG-SQ1) protein is Translation initiation factor IF-1.